The following is a 264-amino-acid chain: S-adenosylmethionine decarboxylase proenzyme (264 aa).

The active-site Schiff-base intermediate with substrate; via pyruvic acid is serine 112. Serine 112 bears the Pyruvic acid (Ser); by autocatalysis mark. The active-site Proton acceptor; for processing activity is the histidine 117. Cysteine 140 functions as the Proton donor; for catalytic activity in the catalytic mechanism.

The protein belongs to the prokaryotic AdoMetDC family. Type 2 subfamily. In terms of assembly, heterooctamer of four alpha and four beta chains arranged as a tetramer of alpha/beta heterodimers. It depends on pyruvate as a cofactor. Is synthesized initially as an inactive proenzyme. Formation of the active enzyme involves a self-maturation process in which the active site pyruvoyl group is generated from an internal serine residue via an autocatalytic post-translational modification. Two non-identical subunits are generated from the proenzyme in this reaction, and the pyruvate is formed at the N-terminus of the alpha chain, which is derived from the carboxyl end of the proenzyme. The post-translation cleavage follows an unusual pathway, termed non-hydrolytic serinolysis, in which the side chain hydroxyl group of the serine supplies its oxygen atom to form the C-terminus of the beta chain, while the remainder of the serine residue undergoes an oxidative deamination to produce ammonia and the pyruvoyl group blocking the N-terminus of the alpha chain.

It catalyses the reaction S-adenosyl-L-methionine + H(+) = S-adenosyl 3-(methylsulfanyl)propylamine + CO2. Its pathway is amine and polyamine biosynthesis; S-adenosylmethioninamine biosynthesis; S-adenosylmethioninamine from S-adenosyl-L-methionine: step 1/1. Its function is as follows. Catalyzes the decarboxylation of S-adenosylmethionine to S-adenosylmethioninamine (dcAdoMet), the propylamine donor required for the synthesis of the polyamines spermine and spermidine from the diamine putrescine. This is S-adenosylmethionine decarboxylase proenzyme from Salmonella dublin (strain CT_02021853).